Reading from the N-terminus, the 456-residue chain is Acetylcholine receptor subunit alpha (456 aa).

Positions 1-20 (MNYFILILPILPYLYGPAVC) are cleaved as a signal peptide. Residues 21–230 (SEDETRLVKT…ITYHFLLLRL (210 aa)) are Extracellular-facing. Cystine bridges form between Cys148–Cys162 and Cys212–Cys213. The N-linked (GlcNAc...) asparagine glycan is linked to Asn161. 3 consecutive transmembrane segments (helical) span residues 231-255 (PLYFIVNVIIPCMLFSFLTGLVFYL), 263-281 (MTLSISVLLSLTVFLLVIV), and 297-316 (YMLFTMIFVIASIIITVIVI). The Cytoplasmic portion of the chain corresponds to 317-428 (NTHHRSPSTH…WKFVAMVLDH (112 aa)). The helical transmembrane segment at 429 to 447 (ILLCVFMAVCIIGTLGVFA) threads the bilayer.

This sequence belongs to the ligand-gated ion channel (TC 1.A.9) family. Acetylcholine receptor (TC 1.A.9.1) subfamily. Alpha-1/CHRNA1 sub-subfamily. In terms of assembly, one of the alpha chains that assemble within the acetylcholine receptor, a pentamer of two alpha chains, a beta, a delta, and a gamma or epsilon chains.

The protein localises to the postsynaptic cell membrane. Its subcellular location is the cell membrane. It carries out the reaction K(+)(in) = K(+)(out). The catalysed reaction is Na(+)(in) = Na(+)(out). Functionally, upon acetylcholine binding, the AChR responds by an extensive change in conformation that affects all subunits and leads to opening of an ion-conducting channel across the plasma membrane. This chain is Acetylcholine receptor subunit alpha (chrna1), found in Danio rerio (Zebrafish).